A 273-amino-acid chain; its full sequence is tRNA pseudouridine synthase B (273 aa).

Asp-38 (nucleophile) is an active-site residue.

Belongs to the pseudouridine synthase TruB family. Type 1 subfamily.

It catalyses the reaction uridine(55) in tRNA = pseudouridine(55) in tRNA. Its function is as follows. Responsible for synthesis of pseudouridine from uracil-55 in the psi GC loop of transfer RNAs. The protein is tRNA pseudouridine synthase B of Campylobacter curvus (strain 525.92).